Consider the following 1895-residue polypeptide: 1,3-beta-glucan synthase component GSC2 (1895 aa).

Composition is skewed to polar residues over residues 1-16 (MSYN…YSNG) and 25-34 (PTYQVTQDQS). Disordered regions lie at residues 1–143 (MSYN…PYGN) and 269–292 (ARKA…EETL). Residues 1–473 (MSYNDPNLNG…WLHLVTNFNR (473 aa)) are Extracellular-facing. Residues 65–78 (QFPQGQDPSQDQGP) show a composition bias toward low complexity. Polar residues-rich tracts occupy residues 79–107 (YNND…SDFS) and 115–141 (TYPN…STPY). The span at 269 to 278 (ARKAKKKNKK) shows a compositional bias: basic residues. Lys-278 participates in a covalent cross-link: Glycyl lysine isopeptide (Lys-Gly) (interchain with G-Cter in ubiquitin). 2 positions are modified to phosphothreonine: Thr-288 and Thr-291. Lys-405 is covalently cross-linked (Glycyl lysine isopeptide (Lys-Gly) (interchain with G-Cter in ubiquitin)). Residues 474–494 (IWIMHISVYWMYCAYNAPTFY) form a helical membrane-spanning segment. Over 495 to 511 (THNYQQLVDNQPLAAYK) the chain is Cytoplasmic. A helical transmembrane segment spans residues 512–532 (WATAALGGTVASLIQVAATLC). Topologically, residues 533 to 550 (EWSFVPRKWAGAQHLSRR) are extracellular. Residues 551–571 (FWFLCVIMGINLGPVIFVFAY) traverse the membrane as a helical segment. The Cytoplasmic segment spans residues 572–582 (DKDTVYSTAAH). Residues 583–603 (VVGAVMFFVAVATLVFFSVMP) form a helical membrane-spanning segment. Topologically, residues 604–1579 (LGGLFTSYMK…DASRAHRTNL (976 aa)) are extracellular. Residues Lys-929, Lys-934, Lys-1558, and Lys-1566 each participate in a glycyl lysine isopeptide (Lys-Gly) (interchain with G-Cter in ubiquitin) cross-link. The helical transmembrane segment at 1580-1600 (IMAEIIPCAIYAAGCFIAFTF) threads the bilayer. At 1601–1620 (INAQTGVKTTDEDRVNSTLR) the chain is on the cytoplasmic side. The helical transmembrane segment at 1621–1641 (IIICTLAPIVIDIGVLFFCMG) threads the bilayer. Residues 1642-1758 (LSCCSGPLLG…LTAKVIELSE (117 aa)) lie on the Extracellular side of the membrane. The chain crosses the membrane as a helical span at residues 1759-1779 (FAADFVLGHVILIFQLPVICI). Topologically, residues 1780–1821 (PKIDKFHSIMLFWLKPSRQIRPPIYSLKQARLRKRMVRRYCS) are cytoplasmic. Residues 1822-1842 (LYFLVLIIFAGCIVGPAVASA) form a helical membrane-spanning segment. Over 1843 to 1895 (HVPKDLGSGLTGTFHNLVQPRNVSNNDTGSQMSTYKSHYYTHTPSLKTWSTIK) the chain is Extracellular.

This sequence belongs to the glycosyltransferase 48 family. Component of the 1,3-beta-glucan synthase (GS) complex, composed of two alternate catalytic subunits FKS1 or GSC2, and a regulatory subunit RHO1. Interacts with SMK1.

It is found in the membrane. It carries out the reaction [(1-&gt;3)-beta-D-glucosyl](n) + UDP-alpha-D-glucose = [(1-&gt;3)-beta-D-glucosyl](n+1) + UDP + H(+). Its function is as follows. Alternate catalytic subunit of the 1,3-beta-glucan synthase (GS) complex. Synthesizes 1,3-beta-glucan, a major structural component of the yeast cell wall. Required for spore wall assembly. Negative regulation of activity by SMK1 is important for spore wall deposition. Activity is positively regulated by RHO1. The protein is 1,3-beta-glucan synthase component GSC2 of Saccharomyces cerevisiae (strain ATCC 204508 / S288c) (Baker's yeast).